The chain runs to 155 residues: NADH-ubiquinone oxidoreductase chain 6 (155 aa).

A run of 4 helical transmembrane segments spans residues I10–V30, L43–I63, G75–S95, and A133–I153.

It belongs to the complex I subunit 6 family.

It localises to the mitochondrion membrane. It catalyses the reaction a ubiquinone + NADH + 5 H(+)(in) = a ubiquinol + NAD(+) + 4 H(+)(out). Its function is as follows. Core subunit of the mitochondrial membrane respiratory chain NADH dehydrogenase (Complex I) that is believed to belong to the minimal assembly required for catalysis. Complex I functions in the transfer of electrons from NADH to the respiratory chain. The immediate electron acceptor for the enzyme is believed to be ubiquinone. In Candida parapsilosis (Yeast), this protein is NADH-ubiquinone oxidoreductase chain 6 (ND6).